A 357-amino-acid chain; its full sequence is DNA integrity scanning protein DisA (357 aa).

The DAC domain occupies 8 to 148; it reads PQELIEKIKL…NYKYVVNQVD (141 aa). 5 residues coordinate 3',3'-c-di-AMP: glycine 76, leucine 94, threonine 107, threonine 111, and arginine 128.

This sequence belongs to the DisA family. As to quaternary structure, homooctamer. Mg(2+) is required as a cofactor.

It carries out the reaction 2 ATP = 3',3'-c-di-AMP + 2 diphosphate. Inhibited by 3'-dATP. In terms of biological role, participates in a DNA-damage check-point. DisA forms globular foci that rapidly scan along the chromosomes searching for lesions. Has diadenylate cyclase activity, catalyzing the condensation of 2 ATP molecules into cyclic di-AMP (c-di-AMP). c-di-AMP likely acts as a signaling molecule that may couple DNA integrity with a cellular process. This rate-limiting step is the accessibility of the active site; mutating the possible exit tunnel (residues 128-130) increases product 2-fold despite Arg-130 being important for ATP-binding. Does not convert GTP to c-di-GMP. This Thermotoga maritima (strain ATCC 43589 / DSM 3109 / JCM 10099 / NBRC 100826 / MSB8) protein is DNA integrity scanning protein DisA.